We begin with the raw amino-acid sequence, 580 residues long: Acyl-coenzyme A synthetase ACSM3, mitochondrial (580 aa).

The N-terminal 21 residues, 1-21 (MVMLLRARCFQRLAIPDPMRV), are a transit peptide targeting the mitochondrion. 2 positions are modified to N6-succinyllysine: K67 and K100. At K151 the chain carries N6-acetyllysine. ATP-binding positions include 229–237 (TSGTTGPPK), 368–373 (EGYGQT), D455, R470, and K566.

It belongs to the ATP-dependent AMP-binding enzyme family. It depends on Mg(2+) as a cofactor. Mn(2+) is required as a cofactor. As to expression, detected in kidney (at protein level). Detected in kidney proximal tubules and in liver. Detected at low levels in testis, stomach, heart and lung.

The protein resides in the mitochondrion. It localises to the mitochondrion matrix. The enzyme catalyses a medium-chain fatty acid + ATP + CoA = a medium-chain fatty acyl-CoA + AMP + diphosphate. The catalysed reaction is propanoate + ATP + CoA = propanoyl-CoA + AMP + diphosphate. It catalyses the reaction butanoate + ATP + CoA = butanoyl-CoA + AMP + diphosphate. It carries out the reaction 2-methylpropanoate + ATP + CoA = 2-methylpropanoyl-CoA + AMP + diphosphate. The enzyme catalyses 2-methylbutanoate + ATP + CoA = 2-methylbutanoyl-CoA + AMP + diphosphate. The catalysed reaction is octanoate + ATP + CoA = octanoyl-CoA + AMP + diphosphate. Catalyzes the activation of fatty acids by CoA to produce an acyl-CoA, the first step in fatty acid metabolism. Capable of activating medium-chain fatty acids with a preference for isobutyrate among fatty acids with 2-6 carbon atoms. The chain is Acyl-coenzyme A synthetase ACSM3, mitochondrial (Acsm3) from Mus musculus (Mouse).